The primary structure comprises 190 residues: Guanylate kinase (190 aa).

The region spanning 3 to 185 (NYIFIISAPS…SLEQLCKYFE (183 aa)) is the Guanylate kinase-like domain. 10-17 (APSGAGKS) serves as a coordination point for ATP.

This sequence belongs to the guanylate kinase family.

The protein localises to the cytoplasm. The catalysed reaction is GMP + ATP = GDP + ADP. Its function is as follows. Essential for recycling GMP and indirectly, cGMP. In Francisella tularensis subsp. holarctica (strain OSU18), this protein is Guanylate kinase.